The primary structure comprises 123 residues: UPF0102 protein DR_2282 (123 aa).

This sequence belongs to the UPF0102 family.

The polypeptide is UPF0102 protein DR_2282 (Deinococcus radiodurans (strain ATCC 13939 / DSM 20539 / JCM 16871 / CCUG 27074 / LMG 4051 / NBRC 15346 / NCIMB 9279 / VKM B-1422 / R1)).